The chain runs to 81 residues: Small ribosomal subunit protein bS18 (81 aa).

It belongs to the bacterial ribosomal protein bS18 family. Part of the 30S ribosomal subunit. Forms a tight heterodimer with protein bS6.

Binds as a heterodimer with protein bS6 to the central domain of the 16S rRNA, where it helps stabilize the platform of the 30S subunit. This Desulfotalea psychrophila (strain LSv54 / DSM 12343) protein is Small ribosomal subunit protein bS18.